A 545-amino-acid chain; its full sequence is Chaperonin GroEL 2 (545 aa).

ATP-binding positions include 29-32, 86-90, Gly-414, and Asp-499; these read TLGP and DGTTT.

The protein belongs to the chaperonin (HSP60) family. In terms of assembly, forms a cylinder of 14 subunits composed of two heptameric rings stacked back-to-back. Interacts with the co-chaperonin GroES.

It is found in the cytoplasm. The catalysed reaction is ATP + H2O + a folded polypeptide = ADP + phosphate + an unfolded polypeptide.. Its function is as follows. Together with its co-chaperonin GroES, plays an essential role in assisting protein folding. The GroEL-GroES system forms a nano-cage that allows encapsulation of the non-native substrate proteins and provides a physical environment optimized to promote and accelerate protein folding. The polypeptide is Chaperonin GroEL 2 (Chloroflexus aurantiacus (strain ATCC 29366 / DSM 635 / J-10-fl)).